Here is a 180-residue protein sequence, read N- to C-terminus: Crossover junction endodeoxyribonuclease RuvC (180 aa).

Residues Asp-7, Glu-66, and Asp-138 contribute to the active site. Residues Asp-7, Glu-66, and Asp-138 each contribute to the Mg(2+) site.

This sequence belongs to the RuvC family. As to quaternary structure, homodimer which binds Holliday junction (HJ) DNA. The HJ becomes 2-fold symmetrical on binding to RuvC with unstacked arms; it has a different conformation from HJ DNA in complex with RuvA. In the full resolvosome a probable DNA-RuvA(4)-RuvB(12)-RuvC(2) complex forms which resolves the HJ. Mg(2+) is required as a cofactor.

The protein resides in the cytoplasm. It catalyses the reaction Endonucleolytic cleavage at a junction such as a reciprocal single-stranded crossover between two homologous DNA duplexes (Holliday junction).. Its function is as follows. The RuvA-RuvB-RuvC complex processes Holliday junction (HJ) DNA during genetic recombination and DNA repair. Endonuclease that resolves HJ intermediates. Cleaves cruciform DNA by making single-stranded nicks across the HJ at symmetrical positions within the homologous arms, yielding a 5'-phosphate and a 3'-hydroxyl group; requires a central core of homology in the junction. The consensus cleavage sequence is 5'-(A/T)TT(C/G)-3'. Cleavage occurs on the 3'-side of the TT dinucleotide at the point of strand exchange. HJ branch migration catalyzed by RuvA-RuvB allows RuvC to scan DNA until it finds its consensus sequence, where it cleaves and resolves the cruciform DNA. The polypeptide is Crossover junction endodeoxyribonuclease RuvC (Janthinobacterium sp. (strain Marseille) (Minibacterium massiliensis)).